The primary structure comprises 233 residues: Orotidine 5'-phosphate decarboxylase (233 aa).

Substrate is bound by residues Asp11, Lys33, 60–69 (DLKFHDIPNT), Thr120, Arg181, Gln190, Gly210, and Arg211. Lys62 acts as the Proton donor in catalysis.

Belongs to the OMP decarboxylase family. Type 1 subfamily. Homodimer.

The enzyme catalyses orotidine 5'-phosphate + H(+) = UMP + CO2. It participates in pyrimidine metabolism; UMP biosynthesis via de novo pathway; UMP from orotate: step 2/2. Its function is as follows. Catalyzes the decarboxylation of orotidine 5'-monophosphate (OMP) to uridine 5'-monophosphate (UMP). In Vibrio campbellii (strain ATCC BAA-1116), this protein is Orotidine 5'-phosphate decarboxylase.